Reading from the N-terminus, the 87-residue chain is Long neurotoxin LlLong (87 aa).

An N-terminal signal peptide occupies residues Lys-1–Thr-20. Disulfide bonds link Cys-23–Cys-41, Cys-34–Cys-62, Cys-47–Cys-51, Cys-66–Cys-77, and Cys-78–Cys-83.

Belongs to the three-finger toxin family. Long-chain subfamily. Type II alpha-neurotoxin sub-subfamily. In terms of tissue distribution, expressed by the venom gland.

It is found in the secreted. In terms of biological role, binds with high affinity to muscular (alpha-1/CHRNA1) and neuronal (alpha-7/CHRNA7) nicotinic acetylcholine receptor (nAChR) and inhibits acetylcholine from binding to the receptor, thereby impairing neuromuscular and neuronal transmission. The sequence is that of Long neurotoxin LlLong from Laticauda laticaudata (Blue-ringed sea krait).